We begin with the raw amino-acid sequence, 381 residues long: Zinc finger CCCH domain-containing protein 61 (381 aa).

Residues 1-39 (MDVEHHKSGHISRPTVDIPPRKLLSSAKSPSSVSSPLRD) are disordered. Positions 21-37 (RKLLSSAKSPSSVSSPL) are enriched in low complexity. C3H1-type zinc fingers lie at residues 101–128 (YTGE…HGVF) and 137–159 (YRTE…AHSP).

As to quaternary structure, interacts with MARD1/FLZ9 and RD21A via its CCCH zing finger domains.

It is found in the cytoplasm. The protein localises to the stress granule. The protein resides in the P-body. This chain is Zinc finger CCCH domain-containing protein 61, found in Arabidopsis thaliana (Mouse-ear cress).